A 219-amino-acid polypeptide reads, in one-letter code: uncharacterized protein (219 aa).

The segment at 70 to 102 (VHIGDNHPEPKNESKTQPKIESKKEPTLKQEEQ) is disordered. Basic and acidic residues predominate over residues 73-101 (GDNHPEPKNESKTQPKIESKKEPTLKQEE). Positions 96 to 120 (TLKQEEQTIQAEEEAQKIAKEETRE) form a coiled coil. The next 3 membrane-spanning stretches (helical) occupy residues 126–146 (GGEI…VNML), 153–173 (IFGL…VIVL), and 192–212 (TYGV…AIFF).

The protein localises to the membrane. This is an uncharacterized protein from Acanthamoeba polyphaga mimivirus (APMV).